We begin with the raw amino-acid sequence, 233 residues long: uncharacterized protein (233 aa).

It belongs to the asfivirus H233R family.

This is an uncharacterized protein from African swine fever virus (isolate Tick/Malawi/Lil 20-1/1983) (ASFV).